The chain runs to 388 residues: Granulocyte-macrophage colony-stimulating factor receptor subunit alpha (388 aa).

A signal peptide spans 1–29 (MTSSHAMNITPLAQLALLFSTLLLPGTQA). Topologically, residues 30 to 327 (LLAPTTPDAG…PLEAEDTRVP (298 aa)) are extracellular. N43, N63, N106, N132, N165, and N237 each carry an N-linked (GlcNAc...) asparagine glycan. Positions 228–324 (PPRDVTASCN…PAHPLEAEDT (97 aa)) constitute a Fibronectin type-III domain. The WSXWS motif signature appears at 310–314 (WGEWS). The helical transmembrane segment at 328-348 (GALLYAVTACAVLLCALALGV) threads the bilayer. The Cytoplasmic portion of the chain corresponds to 349 to 388 (TCRRFEVTRRLFPPIPGIRDKVSDDVRVNPETLRKDLLQP). A Box 1 motif motif is present at residues 359–367 (LFPPIPGIR).

This sequence belongs to the type I cytokine receptor family. Type 5 subfamily. In terms of assembly, heterodimer of an alpha and a beta subunit. The beta subunit is common to the IL3, IL5 and GM-CSF receptors. The signaling GM-CSF receptor complex is a dodecamer of two head-to-head hexamers of two alpha, two beta, and two ligand subunits.

It is found in the membrane. Low affinity receptor for granulocyte-macrophage colony-stimulating factor. Transduces a signal that results in the proliferation, differentiation, and functional activation of hematopoietic cells. This is Granulocyte-macrophage colony-stimulating factor receptor subunit alpha (Csf2ra) from Mus musculus (Mouse).